We begin with the raw amino-acid sequence, 417 residues long: Serine hydroxymethyltransferase 2 (417 aa).

Residues Leu-121 and 125-127 (GHL) contribute to the (6S)-5,6,7,8-tetrahydrofolate site. Position 230 is an N6-(pyridoxal phosphate)lysine (Lys-230). 355 to 357 (SPF) contributes to the (6S)-5,6,7,8-tetrahydrofolate binding site.

This sequence belongs to the SHMT family. As to quaternary structure, homodimer. It depends on pyridoxal 5'-phosphate as a cofactor.

It is found in the cytoplasm. It catalyses the reaction (6R)-5,10-methylene-5,6,7,8-tetrahydrofolate + glycine + H2O = (6S)-5,6,7,8-tetrahydrofolate + L-serine. It participates in one-carbon metabolism; tetrahydrofolate interconversion. It functions in the pathway amino-acid biosynthesis; glycine biosynthesis; glycine from L-serine: step 1/1. Catalyzes the reversible interconversion of serine and glycine with tetrahydrofolate (THF) serving as the one-carbon carrier. This reaction serves as the major source of one-carbon groups required for the biosynthesis of purines, thymidylate, methionine, and other important biomolecules. Also exhibits THF-independent aldolase activity toward beta-hydroxyamino acids, producing glycine and aldehydes, via a retro-aldol mechanism. This Pseudomonas syringae pv. syringae (strain B728a) protein is Serine hydroxymethyltransferase 2.